A 391-amino-acid chain; its full sequence is Putative penicillin-binding protein PbpX (391 aa).

The chain crosses the membrane as a helical span at residues glycine 21–leucine 40. Residues serine 44–glutamine 76 are disordered. A compositionally biased stretch (polar residues) spans serine 50–threonine 59.

It belongs to the beta-lactamase family.

The protein resides in the cell membrane. This Bacillus subtilis (strain 168) protein is Putative penicillin-binding protein PbpX (pbpX).